We begin with the raw amino-acid sequence, 240 residues long: 7-cyano-7-deazaguanine synthase (240 aa).

14 to 24 (FSGGQDSATCL) contributes to the ATP binding site. Residues Cys202, Cys217, Cys220, and Cys223 each coordinate Zn(2+).

This sequence belongs to the QueC family. The cofactor is Zn(2+).

It catalyses the reaction 7-carboxy-7-deazaguanine + NH4(+) + ATP = 7-cyano-7-deazaguanine + ADP + phosphate + H2O + H(+). The protein operates within purine metabolism; 7-cyano-7-deazaguanine biosynthesis. Functionally, catalyzes the ATP-dependent conversion of 7-carboxy-7-deazaguanine (CDG) to 7-cyano-7-deazaguanine (preQ(0)). The polypeptide is 7-cyano-7-deazaguanine synthase (Rhodopseudomonas palustris (strain BisB18)).